The chain runs to 814 residues: Protein kinase C-binding protein NELL2 (814 aa).

Positions 1–19 are cleaved as a signal peptide; sequence MEFILGIFCVIFCLRAGAG. Asn-51, Asn-223, and Asn-296 each carry an N-linked (GlcNAc...) asparagine glycan. The region spanning 53 to 226 is the Laminin G-like domain; it reads SKAFLFQDTS…SQCPDLNRTC (174 aa). A VWFC 1 domain is found at 270–329; sequence RSCTVKGNIYRELESWMDGCKKCTCTNGTAQCETLTCSVPNCLSGFAPAYVPGKCCKECQ. Residues 395-437 enclose the EGF-like 1 domain; the sequence is GHDFCSEGHNCVEYSICKNLNDKAVCICRDGFRALREDSAYCE. 3 disulfides stabilise this stretch: Cys-399-Cys-411, Cys-405-Cys-420, and Cys-422-Cys-436. The Ca(2+) site is built by Asp-438, Ile-439, and Glu-441. One can recognise an EGF-like 2; calcium-binding domain in the interval 438–479; that stretch reads DIDECTEGRHYCRENTVCVNTPGSFMCVCQTGYLKIDDYSCT. Cystine bridges form between Cys-442/Cys-455, Cys-449/Cys-464, Cys-466/Cys-478, Cys-484/Cys-497, Cys-491/Cys-506, Cys-508/Cys-519, Cys-523/Cys-533, Cys-527/Cys-539, and Cys-541/Cys-550. Residues Asn-457, Thr-458, and Ser-461 each contribute to the Ca(2+) site. The EGF-like 3; calcium-binding domain maps to 480–520; the sequence is EHNECATNQHSCDENAVCYNTVGGHNCVCQPGYTGNGTVCK. Asn-515 carries N-linked (GlcNAc...) asparagine glycosylation. The EGF-like 4 domain maps to 521–551; sequence AFCTDGCRNGGTCIAPNICACPQGFTGPSCE. Positions 553, 554, and 556 each coordinate Ca(2+). Residues 553–599 enclose the EGF-like 5; calcium-binding domain; the sequence is DIDECTEGFVQCDSRANCINLPGWYHCECRDGYHDNGMFSLSGESCE. Cystine bridges form between Cys-557-Cys-570, Cys-564-Cys-579, and Cys-581-Cys-598. The Ca(2+) site is built by Asn-572, Leu-573, and Trp-576. Ca(2+) is bound by residues Asp-600, Ile-601, and Glu-603. The region spanning 600-635 is the EGF-like 6; calcium-binding domain; the sequence is DIDECATGRHSCSNDTVCFNLDGGFDCRCPHGKNCS. 3 disulfides stabilise this stretch: Cys-604-Cys-617, Cys-611-Cys-626, and Cys-628-Cys-634. A glycan (N-linked (GlcNAc...) asparagine) is linked at Asn-613. Residues Asn-619, Leu-620, and Gly-623 each coordinate Ca(2+). Residue Asn-633 is glycosylated (N-linked (GlcNAc...) asparagine). VWFC domains are found at residues 636-691 and 696-754; these read GDCT…PECD and SQCL…PRCI.

As to quaternary structure, homotrimer.

It localises to the secreted. Its function is as follows. May regulate neuronal differentiation, polarization and axon guidance. This Xenopus tropicalis (Western clawed frog) protein is Protein kinase C-binding protein NELL2 (nell2).